The primary structure comprises 516 residues: Facilitated glucose transporter homolog (516 aa).

Positions 1–37 are disordered; the sequence is MNAVVASQNKNDRSFSNMESESSSNVEKSEKENHHQS. Topologically, residues 1-47 are cytoplasmic; it reads MNAVVASQNKNDRSFSNMESESSSNVEKSEKENHHQSLPDENWTPFL. Residues 14 to 26 show a composition bias toward low complexity; sequence SFSNMESESSSNV. Basic and acidic residues predominate over residues 27–37; sequence EKSEKENHHQS. The helical transmembrane segment at 48 to 68 threads the bilayer; the sequence is FFCISSIALASFQDGFQIGCI. At 69–101 the chain is on the extracellular side; it reads NAPGPLIIDWIKKCHFELFGEVLSQYQADFIWS. Residues 102-122 form a helical membrane-spanning segment; sequence VAVSMFSVGGMFGSFCSGFLA. Residues 123–138 lie on the Cytoplasmic side of the membrane; that stretch reads DKFGRKSTLLYNNILA. A helical transmembrane segment spans residues 139–159; sequence LLAAVCLSTSKLFNFYPMIVF. At 160–161 the chain is on the extracellular side; sequence GR. Residues 162-182 traverse the membrane as a helical segment; sequence FLVGLNCGITSGLVPMFLTEL. The Cytoplasmic segment spans residues 183-200; sequence APANLRGKCGSFHQLNIS. Residues 201–221 form a helical membrane-spanning segment; it reads VAIVLSQALGLPQIFGTQVGW. Proline 222 is a topological domain (extracellular). Residues 223 to 243 form a helical membrane-spanning segment; it reads YIFACVAIPTFLQLATIPFCV. Topologically, residues 244-306 are cytoplasmic; that stretch reads ESPKYLISKL…SLFKGDNQWP (63 aa). The chain crosses the membrane as a helical span at residues 307 to 327; the sequence is MIVSILMMFSQQFSGISAVTF. Topologically, residues 328-344 are extracellular; it reads YSTLIFKRNGLSGNEPM. A helical membrane pass occupies residues 345 to 365; it reads YATVGFGCIKLIATFGCLFLI. Residues 366–376 lie on the Cytoplasmic side of the membrane; it reads DHPKFGRKRLH. A helical membrane pass occupies residues 377-397; that stretch reads IAGLSGMCISSILIVITLTLS. The Extracellular segment spans residues 398–409; sequence NAGYHWASYMNV. A helical membrane pass occupies residues 410-430; that stretch reads LFILSFVVTFAFGPGPIPWFF. Topologically, residues 431-444 are cytoplasmic; sequence TSELFDSATRGRAA. The chain crosses the membrane as a helical span at residues 445 to 465; the sequence is AVSATSNWVANWMVGLTFLPI. Residues 466–471 are Extracellular-facing; it reads NNIIHQ. Residues 472–492 form a helical membrane-spanning segment; the sequence is YAFLMFTFFTFTFAIFTWKFV. At 493–516 the chain is on the cytoplasmic side; it reads PETKGKSPSAIRKELAFMRKRICS.

The protein belongs to the major facilitator superfamily. Sugar transporter (TC 2.A.1.1) family. Expressed in seam cells from the early embryonic stage through the L2 stage (at protein level).

It is found in the cell membrane. Appears to have no transport activity for glucose. The sequence is that of Facilitated glucose transporter homolog from Caenorhabditis elegans.